Consider the following 203-residue polypeptide: FMN-dependent NADH:quinone oxidoreductase 5 (203 aa).

Residues serine 9, 15 to 17, 95 to 98, and 139 to 142 contribute to the FMN site; these read SAS, MYNF, and TSGG.

The protein belongs to the azoreductase type 1 family. As to quaternary structure, homodimer. FMN is required as a cofactor.

It carries out the reaction 2 a quinone + NADH + H(+) = 2 a 1,4-benzosemiquinone + NAD(+). The catalysed reaction is N,N-dimethyl-1,4-phenylenediamine + anthranilate + 2 NAD(+) = 2-(4-dimethylaminophenyl)diazenylbenzoate + 2 NADH + 2 H(+). Its function is as follows. Quinone reductase that provides resistance to thiol-specific stress caused by electrophilic quinones. Functionally, also exhibits azoreductase activity. Catalyzes the reductive cleavage of the azo bond in aromatic azo compounds to the corresponding amines. The chain is FMN-dependent NADH:quinone oxidoreductase 5 from Pseudomonas fluorescens (strain ATCC BAA-477 / NRRL B-23932 / Pf-5).